The primary structure comprises 27 residues: Conotoxin flf14a (27 aa).

2 disulfides stabilise this stretch: Cys6-Cys26 and Cys10-Cys22.

In terms of tissue distribution, expressed by the venom duct.

The protein resides in the secreted. This is Conotoxin flf14a from Conus anabathrum floridanus (Florida cone).